The chain runs to 705 residues: Probable iron-sulfur-binding oxidoreductase FadF (705 aa).

The next 6 membrane-spanning stretches (helical) occupy residues 4–24 (FLIA…YLFV), 71–91 (IIHV…IDFI), 109–129 (AFTF…GWAF), 146–166 (AGLV…GNGM), 173–193 (HGLS…SGVG), and 199–219 (VIFY…LVYV). 4Fe-4S ferredoxin-type domains lie at 268–298 (QSQL…MLSP) and 360–391 (GDVI…VDKI). 8 residues coordinate [4Fe-4S] cluster: cysteine 277, cysteine 280, cysteine 283, cysteine 287, cysteine 371, cysteine 374, cysteine 377, and cysteine 381.

It depends on [4Fe-4S] cluster as a cofactor.

It localises to the cell membrane. The sequence is that of Probable iron-sulfur-binding oxidoreductase FadF (fadF) from Bacillus subtilis (strain 168).